A 542-amino-acid chain; its full sequence is Putative sodium-dependent excitatory amino acid transporter glt-6 (542 aa).

At M1–E15 the chain is on the cytoplasmic side. 3 consecutive transmembrane segments (helical) span residues N16–L36, I55–A75, and L93–I113. Topologically, residues H114–K191 are extracellular. N175 is a glycosylation site (N-linked (GlcNAc...) asparagine). The next 5 helical transmembrane spans lie at G192–L212, V234–L254, V265–V285, G303–M323, and T386–L406. Residues R505 to S517 show a composition bias toward low complexity. The tract at residues R505–V542 is disordered. Polar residues predominate over residues T518 to I529.

Belongs to the dicarboxylate/amino acid:cation symporter (DAACS) (TC 2.A.23) family.

The protein resides in the membrane. The chain is Putative sodium-dependent excitatory amino acid transporter glt-6 (glt-6) from Caenorhabditis elegans.